Here is a 272-residue protein sequence, read N- to C-terminus: Dihydropteroate synthase (272 aa).

In terms of domain architecture, Pterin-binding spans 1 to 251 (MIKTKIMGIL…GVRVHNVLLN (251 aa)). Asn11 is a Mg(2+) binding site. Residues Thr51, Asp89, Asn108, Asp172, Lys208, and 244–246 (RVH) contribute to the (7,8-dihydropterin-6-yl)methyl diphosphate site.

This sequence belongs to the DHPS family. In terms of assembly, homodimer. Mg(2+) serves as cofactor.

The enzyme catalyses (7,8-dihydropterin-6-yl)methyl diphosphate + 4-aminobenzoate = 7,8-dihydropteroate + diphosphate. It participates in cofactor biosynthesis; tetrahydrofolate biosynthesis; 7,8-dihydrofolate from 2-amino-4-hydroxy-6-hydroxymethyl-7,8-dihydropteridine diphosphate and 4-aminobenzoate: step 1/2. In terms of biological role, catalyzes the condensation of para-aminobenzoate (pABA) with 6-hydroxymethyl-7,8-dihydropterin diphosphate (DHPt-PP) to form 7,8-dihydropteroate (H2Pte), the immediate precursor of folate derivatives. The chain is Dihydropteroate synthase (folP) from Staphylococcus epidermidis (strain ATCC 35984 / DSM 28319 / BCRC 17069 / CCUG 31568 / BM 3577 / RP62A).